We begin with the raw amino-acid sequence, 178 residues long: MSRIGNKIITMPAGVELKNDNNVVTVKGPKGELTREFNKNIEIKVEGTEITVSRPNDSKEMKTIHGTTRALLNNMVQGVSEGFKKELEMKGVGYRAQLQGNKLVLSVGKSHQDEVEAPEGITFTVATPTTIAVEGISKELVGQTAAYIRSLRSPEPYKGKGIRYVGEYVRLKEGKTGK.

The protein belongs to the universal ribosomal protein uL6 family. In terms of assembly, part of the 50S ribosomal subunit.

Its function is as follows. This protein binds to the 23S rRNA, and is important in its secondary structure. It is located near the subunit interface in the base of the L7/L12 stalk, and near the tRNA binding site of the peptidyltransferase center. The sequence is that of Large ribosomal subunit protein uL6 from Streptococcus uberis (strain ATCC BAA-854 / 0140J).